Reading from the N-terminus, the 718-residue chain is Protein Hook homolog 1 (718 aa).

In terms of domain architecture, Calponin-homology (CH) spans 8–124; that stretch reads PLLCDSLILW…RLMQLILGCA (117 aa). Coiled coils occupy residues 164 to 428 and 473 to 652; these read SASD…ELRY and LLLQ…AKLR.

The protein belongs to the hook family. As to quaternary structure, interacts with microtubules.

It is found in the cytoplasm. The protein localises to the cytoskeleton. In terms of biological role, may function to promote vesicle trafficking and/or fusion. The chain is Protein Hook homolog 1 (HOOK1) from Gallus gallus (Chicken).